A 2359-amino-acid chain; its full sequence is Voltage-dependent T-type calcium channel subunit alpha-1H (2359 aa).

The tract at residues 1-63 (MTEGTLAADE…PGTECGADLG (63 aa)) is disordered. Over 1 to 100 (MTEGTLAADE…SWCLRLVCNP (100 aa)) the chain is Cytoplasmic. Positions 24-36 (APVRASPASPGAP) are enriched in low complexity. The stretch at 87 to 422 (TRPRSWCLRL…LCLVVIATQF (336 aa)) is one I repeat. The helical transmembrane segment at 101–119 (WFEHISMLVIMLNCVTLGM) threads the bilayer. Topologically, residues 120–141 (FRPCEDVECRSERCSILEAFDD) are extracellular. Asp140 serves as a coordination point for Zn(2+). A helical membrane pass occupies residues 142–160 (FIFAFFAVEMVIKMVALGL). The Cytoplasmic portion of the chain corresponds to 161-169 (FGQKCYLGD). A helical membrane pass occupies residues 170-184 (TWNRLDFFIVMAGMM). Residues 185-193 (EYSLDGHNV) lie on the Extracellular side of the membrane. Residues Asp189 and His191 each coordinate Zn(2+). Residue Asn192 is glycosylated (N-linked (GlcNAc...) asparagine). A helical transmembrane segment spans residues 194–212 (SLSAIRTVRVLRPLRAINR). Residues 213–232 (VPSMRILVTLLLDTLPMLGN) are Cytoplasmic-facing. A helical membrane pass occupies residues 233-253 (VLLLCFFVFFIFGIVGVQLWA). Residues 254–394 (GLLRNRCFLD…YYVMDAHSFY (141 aa)) lie on the Extracellular side of the membrane. Asn271 carries N-linked (GlcNAc...) asparagine glycosylation. A helical membrane pass occupies residues 395–419 (NFIYFILLIIMGSFFMINLCLVVIA). Residues 420 to 790 (TQFSETKQRE…GKLRRIVDSK (371 aa)) are Cytoplasmic-facing. Disordered stretches follow at residues 490–573 (VDPS…SESV), 620–656 (GTVN…SPRP), and 737–769 (GDCR…ASQP). The span at 503-532 (RRPRRAGRRTASVHHLVYHHHHHHHHHYHF) shows a compositional bias: basic residues. The span at 557–566 (PPSPPSPGHG) shows a compositional bias: pro residues. A compositionally biased stretch (polar residues) spans 620-631 (GTVNSKGGTSSR). An II repeat occupies 776 to 1015 (WASFSGKLRR…LLVAILVEGF (240 aa)). The helical transmembrane segment at 791 to 811 (YFNRGIMAAILVNTLSMGVEY) threads the bilayer. At 812–824 (HEQPEELTNALEI) the chain is on the extracellular side. A helical transmembrane segment spans residues 825–846 (SNIVFTSMFALEMLLKLLACGP). The Cytoplasmic segment spans residues 847 to 852 (LGYIRN). A helical transmembrane segment spans residues 853 to 871 (PYNIFDGIVVVISVWEIVG). The Extracellular segment spans residues 872-879 (QANGGLSV). Residues 880–903 (LRTFRLLRVLKLVRFLPALRRQLV) traverse the membrane as a helical segment. Residues 904–914 (VLMRTMDNVAT) lie on the Cytoplasmic side of the membrane. A helical membrane pass occupies residues 915-935 (FCMLLMLFIFIFSILGMHLFG). At 936 to 987 (CKFSLKTDSGDTVPDRKNFDSLLWAIVTVFQILTQEDWNVVLYNGMASTSSW) the chain is on the extracellular side. A helical transmembrane segment spans residues 988–1012 (AALYFVALMTFGNYVLFNLLVAILV). The Cytoplasmic segment spans residues 1013 to 1301 (EGFQAEGDAT…NRLRVSCQKV (289 aa)). The tract at residues 1061–1197 (GHLEGRGSLP…GASPGPRATP (137 aa)) is disordered. Polar residues predominate over residues 1117–1126 (SLASLRSSPC). Over residues 1130 to 1147 (GPNSAGSSRRSSWNSLGR) the composition is skewed to low complexity. The III repeat unit spans residues 1292 to 1569 (NRLRVSCQKV…MFVGVVVENF (278 aa)). Residues 1302–1324 (IAHKMFDHVVLVFIFLNCITIAL) form a helical membrane-spanning segment. Over 1325–1342 (ERPDIDPGSTERAFLSVS) the chain is Extracellular. The chain crosses the membrane as a helical span at residues 1343 to 1363 (NYIFTAIFVVEMMVKVVALGL). Residues 1364 to 1373 (LWGEHAYLQS) lie on the Cytoplasmic side of the membrane. The chain crosses the membrane as a helical span at residues 1374 to 1393 (SWNVLDGLLVLVSLVDIIVA). At 1394–1407 (MASAGGAKILGVLR) the chain is on the extracellular side. Residues 1408–1429 (VLRLLRTLRPLRVISRAPGLKL) traverse the membrane as a helical segment. Residues 1430–1439 (VVETLISSLR) are Cytoplasmic-facing. A helical transmembrane segment spans residues 1440–1463 (PIGNIVLICCAFFIIFGILGVQLF). Residues 1464 to 1540 (KGKFYYCEGT…DQQPVQNHNP (77 aa)) are Extracellular-facing. N-linked (GlcNAc...) asparagine glycosylation is present at Asn1477. The chain crosses the membrane as a helical span at residues 1541 to 1566 (WMLLYFISFLLIVSFFVLNMFVGVVV). Residues 1567–1621 (ENFHKCRQHQEAEEARRREEKRLRRLERRRRKAQRRPYYADYSHTRRSIHSLCTS) lie on the Cytoplasmic side of the membrane. One copy of the IV repeat lies at 1607–1868 (DYSHTRRSIH…VVVAVLMKHL (262 aa)). Residues 1622 to 1642 (HYLDLFITFIICLNVITMSME) traverse the membrane as a helical segment. The Extracellular portion of the chain corresponds to 1643 to 1656 (HYNQPKSLDEALKY). Residues 1657-1678 (CNYVFTIVFVFEAALKLVAFGF) form a helical membrane-spanning segment. At 1679–1685 (RRFFKDR) the chain is on the cytoplasmic side. Residues 1686-1704 (WNQLDLAIVLLSIMGIALE) traverse the membrane as a helical segment. Residues 1705 to 1718 (EIEMNAALPINPTI) lie on the Extracellular side of the membrane. A helical membrane pass occupies residues 1719-1742 (IRIMRVLRIARVLKLLKMATGMRA). At 1743–1756 (LLDTVVQALPQVGN) the chain is on the cytoplasmic side. A helical transmembrane segment spans residues 1757–1777 (LGLLFMLLFFIYAALGVELFG). Residues 1778-1840 (RLECSEDNPC…KHCLSYLPAL (63 aa)) lie on the Extracellular side of the membrane. Residues 1841–1868 (SPVYFVTFMLVAQFVLVNVVVAVLMKHL) traverse the membrane as a helical segment. Topologically, residues 1869 to 2359 (EESNKEARED…APDDSGDEPV (491 aa)) are cytoplasmic. Positions 1891-1911 (QGSTAQPPPTAQESQGTQPDT) are enriched in polar residues. Disordered regions lie at residues 1891–1913 (QGST…DTPN), 1974–2003 (SFQV…PRSL), 2016–2258 (HSES…GERW), and 2335–2359 (PQTP…DEPV). Residues 2016 to 2026 (HSESLEGKVDD) are compositionally biased toward basic and acidic residues. A compositionally biased stretch (acidic residues) spans 2086–2096 (DEAEAADPADE). Residues 2166 to 2181 (GESHLESGEVRGRASE) show a composition bias toward basic and acidic residues.

It belongs to the calcium channel alpha-1 subunit (TC 1.A.1.11) family. CACNA1H subfamily. Interacts (via N-terminal cytoplasmic domain) with STAC. Post-translationally, in response to raising of intracellular calcium, the T-type channels are activated by CaM-kinase II. In terms of tissue distribution, expressed in brain.

It is found in the cell membrane. It carries out the reaction Ca(2+)(in) = Ca(2+)(out). Voltage-sensitive calcium channel that gives rise to T-type calcium currents. T-type calcium channels belong to the 'low-voltage activated (LVA)' group. A particularity of this type of channel is an opening at quite negative potentials, and a voltage-dependent inactivation. T-type channels serve pacemaking functions in both central neurons and cardiac nodal cells and support calcium signaling in secretory cells and vascular smooth muscle. They may also be involved in the modulation of firing patterns of neurons. In the adrenal zona glomerulosa, participates in the signaling pathway leading to aldosterone production in response to either AGT/angiotensin II, or hyperkalemia. The polypeptide is Voltage-dependent T-type calcium channel subunit alpha-1H (Cacna1h) (Rattus norvegicus (Rat)).